A 32-amino-acid polypeptide reads, in one-letter code: Cathepsin B-like cysteine proteinase (32 aa).

Residues 1–22 (KPNYKRQFEPFSDELIHYINLE) constitute a propeptide, activation peptide.

This sequence belongs to the peptidase C1 family.

Its function is as follows. Thiol protease. This chain is Cathepsin B-like cysteine proteinase, found in Fasciola hepatica (Liver fluke).